The primary structure comprises 316 residues: Methionyl-tRNA formyltransferase (316 aa).

112 to 115 (SLLP) is a binding site for (6S)-5,6,7,8-tetrahydrofolate.

The protein belongs to the Fmt family.

It catalyses the reaction L-methionyl-tRNA(fMet) + (6R)-10-formyltetrahydrofolate = N-formyl-L-methionyl-tRNA(fMet) + (6S)-5,6,7,8-tetrahydrofolate + H(+). Functionally, attaches a formyl group to the free amino group of methionyl-tRNA(fMet). The formyl group appears to play a dual role in the initiator identity of N-formylmethionyl-tRNA by promoting its recognition by IF2 and preventing the misappropriation of this tRNA by the elongation apparatus. The polypeptide is Methionyl-tRNA formyltransferase (Haemophilus ducreyi (strain 35000HP / ATCC 700724)).